Reading from the N-terminus, the 238-residue chain is Ribonuclease PH (238 aa).

Phosphate contacts are provided by residues Arg-86 and Gly-124 to Arg-126.

It belongs to the RNase PH family. As to quaternary structure, homohexameric ring arranged as a trimer of dimers.

It carries out the reaction tRNA(n+1) + phosphate = tRNA(n) + a ribonucleoside 5'-diphosphate. Phosphorolytic 3'-5' exoribonuclease that plays an important role in tRNA 3'-end maturation. Removes nucleotide residues following the 3'-CCA terminus of tRNAs; can also add nucleotides to the ends of RNA molecules by using nucleoside diphosphates as substrates, but this may not be physiologically important. Probably plays a role in initiation of 16S rRNA degradation (leading to ribosome degradation) during starvation. The sequence is that of Ribonuclease PH from Rhizorhabdus wittichii (strain DSM 6014 / CCUG 31198 / JCM 15750 / NBRC 105917 / EY 4224 / RW1) (Sphingomonas wittichii).